The sequence spans 607 residues: NAD-dependent malic enzyme 2, mitochondrial (607 aa).

The transit peptide at 1 to 32 (MMWKNIAGLSKAAAAARTHGSRRCFSTAIPGP) directs the protein to the mitochondrion. The Proton donor role is filled by Tyr136. NAD(+) is bound at residue Arg189. Residue Lys207 is the Proton acceptor of the active site. A divalent metal cation-binding residues include Glu278, Asp279, and Asp302. 2 residues coordinate NAD(+): Asp302 and Asn449.

The protein belongs to the malic enzymes family. Homodimer. Heterodimer of two related subunits in NAD-MEH complex. Interacts with NAD-ME1. Mg(2+) is required as a cofactor. Requires Mn(2+) as cofactor. Expressed in leaves, stems, flowers, and roots (at protein level). Present in pollen.

It is found in the mitochondrion. The enzyme catalyses (S)-malate + NAD(+) = pyruvate + CO2 + NADH. Its activity is regulated as follows. Activated by 2-ketoglutarate, phosphoenolpyruvate (PEP), fructose 1,6-biphosphate (FBP) and coenzyme A (acetyl-CoA and CoA) as homodimer and by oxaloacetate (OAA), 2-ketoglutarate, succinate, fumarate and CoA as heterodimer NAD-MEH. Repressed by succinate and fumarate as homodimer, in the presence of NAD(+) and competitively toward the substrate L-malate. Involved in the regulation of sugars and amino acids metabolisms during the night period. This chain is NAD-dependent malic enzyme 2, mitochondrial (NAD-ME2), found in Arabidopsis thaliana (Mouse-ear cress).